Here is a 315-residue protein sequence, read N- to C-terminus: Glutamine synthetase nodule isozyme (315 aa).

One can recognise a GS beta-grasp domain in the interval 19 to 99 (IIAEYIWVGG…VICDTYTPSG (81 aa)). One can recognise a GS catalytic domain in the interval 106 to 315 (KRHAAAKIFS…WGVANRGASI (210 aa)).

This sequence belongs to the glutamine synthetase family. In terms of assembly, homooctamer.

It localises to the cytoplasm. The enzyme catalyses L-glutamate + NH4(+) + ATP = L-glutamine + ADP + phosphate + H(+). The protein is Glutamine synthetase nodule isozyme of Lupinus angustifolius (Narrow-leaved blue lupine).